We begin with the raw amino-acid sequence, 360 residues long: Photosystem II protein D1 (360 aa).

The next 3 helical transmembrane spans lie at 29 to 46 (YIGW…TATT), 118 to 133 (HFLL…EWEL), and 142 to 156 (WIAV…AATA). Chlorophyll a is bound at residue His118. Residue Tyr126 coordinates pheophytin a. [CaMn4O5] cluster contacts are provided by Asp170 and Glu189. The helical transmembrane segment at 197 to 218 (FHMMGVAGVFGGSLFSAMHGSL) threads the bilayer. His198 is a chlorophyll a binding site. Residues His215 and 264-265 (SF) contribute to the a quinone site. Residue His215 coordinates Fe cation. His272 is a binding site for Fe cation. The chain crosses the membrane as a helical span at residues 274–288 (FLALWPVVGIWFTAL). Residues His332, Glu333, Asp342, and Ala344 each coordinate [CaMn4O5] cluster. Residues 345 to 360 (SGEVMPVALTAPSINA) constitute a propeptide that is removed on maturation.

This sequence belongs to the reaction center PufL/M/PsbA/D family. As to quaternary structure, PSII is composed of 1 copy each of membrane proteins PsbA, PsbB, PsbC, PsbD, PsbE, PsbF, PsbH, PsbI, PsbJ, PsbK, PsbL, PsbM, PsbT, PsbX, PsbY, PsbZ, Psb30/Ycf12, at least 3 peripheral proteins of the oxygen-evolving complex and a large number of cofactors. It forms dimeric complexes. Requires The D1/D2 heterodimer binds P680, chlorophylls that are the primary electron donor of PSII, and subsequent electron acceptors. It shares a non-heme iron and each subunit binds pheophytin, quinone, additional chlorophylls, carotenoids and lipids. D1 provides most of the ligands for the Mn4-Ca-O5 cluster of the oxygen-evolving complex (OEC). There is also a Cl(-1) ion associated with D1 and D2, which is required for oxygen evolution. The PSII complex binds additional chlorophylls, carotenoids and specific lipids. as cofactor. In terms of processing, tyr-161 forms a radical intermediate that is referred to as redox-active TyrZ, YZ or Y-Z. C-terminally processed by CTPA; processing is essential to allow assembly of the oxygen-evolving complex and thus photosynthetic growth.

Its subcellular location is the plastid. The protein resides in the cyanelle thylakoid membrane. The catalysed reaction is 2 a plastoquinone + 4 hnu + 2 H2O = 2 a plastoquinol + O2. Functionally, photosystem II (PSII) is a light-driven water:plastoquinone oxidoreductase that uses light energy to abstract electrons from H(2)O, generating O(2) and a proton gradient subsequently used for ATP formation. It consists of a core antenna complex that captures photons, and an electron transfer chain that converts photonic excitation into a charge separation. The D1/D2 (PsbA/PsbD) reaction center heterodimer binds P680, the primary electron donor of PSII as well as several subsequent electron acceptors. The polypeptide is Photosystem II protein D1 (Cyanophora paradoxa).